The sequence spans 742 residues: Collectin-12 (742 aa).

Topologically, residues M1 to K37 are cytoplasmic. Residues F38–G58 form a helical; Signal-anchor for type II membrane protein membrane-spanning segment. The Extracellular segment spans residues Y59–L742. N-linked (GlcNAc...) asparagine glycosylation occurs at N67. Residues E73–A141 adopt a coiled-coil conformation. N-linked (GlcNAc...) asparagine glycosylation is found at N159, N168, and N271. The stretch at Q215 to K328 forms a coiled coil. The disordered stretch occupies residues T439 to P608. 3 consecutive Collagen-like domains span residues G443–K472, G473–P529, and G530–V589. 2 stretches are compositionally biased toward low complexity: residues K502–D525 and K534–P556. Pro residues predominate over residues P571–P585. Intrachain disulfides connect C607/C618, C635/C730, and C708/C722. The C-type lectin domain maps to F614–E731. Ca(2+) contacts are provided by F644, N646, E650, D670, and E674. The a carbohydrate site is built by K691, Q694, and D696. The Ca(2+) site is built by Q694, D696, N697, E706, D707, N718, D719, and E731. E706 lines the a carbohydrate pocket. A carbohydrate is bound by residues N718 and D719.

The extracellular domain forms a stable trimer. The extracellular domain interacts with fibrillar amyloid-beta peptide. As to expression, expressed in perivascular macrophages. Expressed in plaques-surrounding reactive astrocytes and in perivascular astrocytes associated with cerebral amyloid angiopathy (CAA) in the temporal cortex of Alzheimer patient (at protein level). Strongly expressed in placenta. Moderately expressed in heart, skeletal muscle, small intestine and lung. Weakly expressed in brain, colon, thymus and kidney. Expressed in nurse-like cells. Expressed in reactive astrocytes and vascular/perivascular cells in the brain of Alzheimer patient.

The protein localises to the membrane. In terms of biological role, scavenger receptor that displays several functions associated with host defense. Promotes binding and phagocytosis of Gram-positive, Gram-negative bacteria and yeast. Mediates the recognition, internalization and degradation of oxidatively modified low density lipoprotein (oxLDL) by vascular endothelial cells. Binds to several carbohydrates including Gal-type ligands, D-galactose, L- and D-fucose, GalNAc, T and Tn antigens in a calcium-dependent manner and internalizes specifically GalNAc in nurse-like cells. Also binds to sialyl Lewis X or a trisaccharide and asialo-orosomucoid (ASOR). May also play a role in the clearance of amyloid-beta in Alzheimer disease. This Homo sapiens (Human) protein is Collectin-12 (COLEC12).